Consider the following 352-residue polypeptide: Histidinol-phosphate aminotransferase (352 aa).

Position 210 is an N6-(pyridoxal phosphate)lysine (lysine 210).

The protein belongs to the class-II pyridoxal-phosphate-dependent aminotransferase family. Histidinol-phosphate aminotransferase subfamily. As to quaternary structure, homodimer. Pyridoxal 5'-phosphate serves as cofactor.

It catalyses the reaction L-histidinol phosphate + 2-oxoglutarate = 3-(imidazol-4-yl)-2-oxopropyl phosphate + L-glutamate. Its pathway is amino-acid biosynthesis; L-histidine biosynthesis; L-histidine from 5-phospho-alpha-D-ribose 1-diphosphate: step 7/9. In Clostridium acetobutylicum (strain ATCC 824 / DSM 792 / JCM 1419 / IAM 19013 / LMG 5710 / NBRC 13948 / NRRL B-527 / VKM B-1787 / 2291 / W), this protein is Histidinol-phosphate aminotransferase.